The chain runs to 193 residues: GTP cyclohydrolase-2 (193 aa).

A GTP-binding site is contributed by 45–49 (RIHSE). Zn(2+) contacts are provided by Cys50, Cys61, and Cys63. Residues Gln66, 87–89 (EGR), and Thr109 contribute to the GTP site. Asp121 functions as the Proton acceptor in the catalytic mechanism. The active-site Nucleophile is the Arg123. 2 residues coordinate GTP: Thr144 and Lys149.

It belongs to the GTP cyclohydrolase II family. It depends on Zn(2+) as a cofactor.

It carries out the reaction GTP + 4 H2O = 2,5-diamino-6-hydroxy-4-(5-phosphoribosylamino)-pyrimidine + formate + 2 phosphate + 3 H(+). The protein operates within cofactor biosynthesis; riboflavin biosynthesis; 5-amino-6-(D-ribitylamino)uracil from GTP: step 1/4. Catalyzes the conversion of GTP to 2,5-diamino-6-ribosylamino-4(3H)-pyrimidinone 5'-phosphate (DARP), formate and pyrophosphate. The protein is GTP cyclohydrolase-2 of Campylobacter hominis (strain ATCC BAA-381 / DSM 21671 / CCUG 45161 / LMG 19568 / NCTC 13146 / CH001A).